The sequence spans 78 residues: RNA-binding protein Hfq (78 aa).

Positions aspartate 10–valine 69 constitute a Sm domain.

It belongs to the Hfq family. As to quaternary structure, homohexamer.

Its function is as follows. RNA chaperone that binds small regulatory RNA (sRNAs) and mRNAs to facilitate mRNA translational regulation in response to envelope stress, environmental stress and changes in metabolite concentrations. Also binds with high specificity to tRNAs. This is RNA-binding protein Hfq from Dechloromonas aromatica (strain RCB).